The primary structure comprises 261 residues: MRNDGLRIEGLTIATLGAHPLMLVEGVGLEVRRGRILALVGASGSGKSLTCAGALDVLPAGVRRLSGRVLLDGEEQALAGLKGRHVASIMQNPRSAFNPVRTMRAHGVETLKALGRHDRRSEAVLLQALEGVGLEDPGRVLGLHAFEMSGGMLQRMMIALALLTEAPFLFADEPTTDLDLVVQARVLSLLEGVVAERGLGLLIVTHDMGVVARLADDVAVMAQGRIVESGPVGEIFHRPRHDATRALVAAHLSLYGLEGVA.

The 243-residue stretch at 6-248 folds into the ABC transporter domain; sequence LRIEGLTIAT…PRHDATRALV (243 aa). 41-48 contributes to the ATP binding site; that stretch reads GASGSGKS.

The protein belongs to the ABC transporter superfamily. Nickel importer (TC 3.A.1.5.3) family. As to quaternary structure, the complex is composed of two ATP-binding proteins (NikD and NikE), two transmembrane proteins (NikB and NikC) and a solute-binding protein (NikA).

The protein localises to the cell inner membrane. It catalyses the reaction Ni(2+)(out) + ATP + H2O = Ni(2+)(in) + ADP + phosphate + H(+). Functionally, part of the ABC transporter complex NikABCDE involved in nickel import. Responsible for energy coupling to the transport system. This is Nickel import ATP-binding protein NikD from Rhodospirillum rubrum (strain ATCC 11170 / ATH 1.1.1 / DSM 467 / LMG 4362 / NCIMB 8255 / S1).